We begin with the raw amino-acid sequence, 466 residues long: uncharacterized protein (466 aa).

The 289-residue stretch at 178 to 466 folds into the Autotransporter domain; that stretch reads SQGSASSMWM…QGMLGVKYSW (289 aa).

This is an uncharacterized protein from Escherichia coli (strain K12).